Here is a 420-residue protein sequence, read N- to C-terminus: Glucose-1-phosphate adenylyltransferase (420 aa).

Residues Y108, G173, 188 to 189, and S206 contribute to the alpha-D-glucose 1-phosphate site; that span reads EK.

The protein belongs to the bacterial/plant glucose-1-phosphate adenylyltransferase family. In terms of assembly, homotetramer.

The enzyme catalyses alpha-D-glucose 1-phosphate + ATP + H(+) = ADP-alpha-D-glucose + diphosphate. It functions in the pathway glycan biosynthesis; glycogen biosynthesis. Its function is as follows. Involved in the biosynthesis of ADP-glucose, a building block required for the elongation reactions to produce glycogen. Catalyzes the reaction between ATP and alpha-D-glucose 1-phosphate (G1P) to produce pyrophosphate and ADP-Glc. This chain is Glucose-1-phosphate adenylyltransferase, found in Paraburkholderia phytofirmans (strain DSM 17436 / LMG 22146 / PsJN) (Burkholderia phytofirmans).